The sequence spans 859 residues: Chitin synthase 1 (859 aa).

Residues 1–22 (MRRWFKKTLPRPPDEEESAGLT) form a disordered region. 5 consecutive transmembrane segments (helical) span residues 544 to 564 (LATI…FYIL), 615 to 635 (MVIM…WIAY), 662 to 682 (FINI…VSII), 793 to 813 (YVVL…LSIP), and 833 to 853 (LWSV…YLFI).

This sequence belongs to the chitin synthase family.

Its subcellular location is the cell membrane. The catalysed reaction is [(1-&gt;4)-N-acetyl-beta-D-glucosaminyl](n) + UDP-N-acetyl-alpha-D-glucosamine = [(1-&gt;4)-N-acetyl-beta-D-glucosaminyl](n+1) + UDP + H(+). In terms of biological role, polymerizes chitin, a structural polymer of the cell wall and septum, by transferring the sugar moiety of UDP-GlcNAc to the non-reducing end of the growing chitin polymer. In Schizosaccharomyces pombe (strain 972 / ATCC 24843) (Fission yeast), this protein is Chitin synthase 1 (chs1).